We begin with the raw amino-acid sequence, 809 residues long: Trimethylamine-N-oxide reductase 2 (809 aa).

Positions 1-31 (MTLTRREFIKHSGIAAGTLVVTSAAPLPAWA) form a signal peptide, tat-type signal. S176 contacts Mo-bis(molybdopterin guanine dinucleotide).

It belongs to the prokaryotic molybdopterin-containing oxidoreductase family. Mo-bis(molybdopterin guanine dinucleotide) serves as cofactor. Predicted to be exported by the Tat system. The position of the signal peptide cleavage has not been experimentally proven.

The protein localises to the periplasm. It carries out the reaction trimethylamine + 2 Fe(III)-[cytochrome c] + H2O = trimethylamine N-oxide + 2 Fe(II)-[cytochrome c] + 3 H(+). Functionally, reduces trimethylamine-N-oxide (TMAO) into trimethylamine; an anaerobic reaction coupled to energy-yielding reactions. Can also reduce other N- and S-oxide compounds such as 4-methylmorpholine-N-oxide and biotin sulfoxide (BSO), but with a lower catalytic efficiency. The protein is Trimethylamine-N-oxide reductase 2 (torZ) of Escherichia coli O6:H1 (strain CFT073 / ATCC 700928 / UPEC).